The sequence spans 883 residues: Alanine--tRNA ligase (883 aa).

His564, His568, Cys666, and His670 together coordinate Zn(2+).

The protein belongs to the class-II aminoacyl-tRNA synthetase family. Requires Zn(2+) as cofactor.

The protein resides in the cytoplasm. The catalysed reaction is tRNA(Ala) + L-alanine + ATP = L-alanyl-tRNA(Ala) + AMP + diphosphate. Catalyzes the attachment of alanine to tRNA(Ala) in a two-step reaction: alanine is first activated by ATP to form Ala-AMP and then transferred to the acceptor end of tRNA(Ala). Also edits incorrectly charged Ser-tRNA(Ala) and Gly-tRNA(Ala) via its editing domain. The protein is Alanine--tRNA ligase of Synechococcus sp. (strain JA-3-3Ab) (Cyanobacteria bacterium Yellowstone A-Prime).